A 1969-amino-acid polypeptide reads, in one-letter code: Myosin-3 (1969 aa).

The Myosin N-terminal SH3-like domain maps to 33-82; it reads DSKKNCWIPDPEDGFVAAEIQSTTGDQVTVVTVKGNQITVKKDQCQEMNP. Positions 86-791 constitute a Myosin motor domain; sequence DKTEDMANLT…VLAKLEDLRD (706 aa). Position 130 is an N6,N6,N6-trimethyllysine (lysine 130). 179-186 contacts ATP; the sequence is GESGAGKT. Actin-binding stretches follow at residues 667 to 689 and 770 to 784; these read LNNL…IPNE and KIGE…GVLA. In terms of domain architecture, IQ spans 794–823; that stretch reads LSRIVTMFQSRIRSYLAKAEVRRRYEQQTG. Residues 853-1941 adopt a coiled-coil conformation; that stretch reads LKAGKEQEAM…KMRNKIRASA (1089 aa). 3 disordered regions span residues 943-967, 993-1029, and 1134-1153; these read QERH…KKHV, DEMA…EEDK, and ELES…NELQ. Composition is skewed to basic and acidic residues over residues 1001–1029 and 1137–1153; these read SVAK…EEDK and SERN…NELQ.

Belongs to the TRAFAC class myosin-kinesin ATPase superfamily. Myosin family. Muscle myosin is a hexameric protein that consists of 2 heavy chain subunits (MHC), 2 alkali light chain subunits (MLC) and 2 regulatory light chain subunits (MLC-2).

The protein localises to the cytoplasm. The protein resides in the myofibril. It localises to the sarcomere. It is found in the a band. Essential for muscle contraction. Involved in ovulation likely by regulating the contraction of gonadal myoepithelial sheath cells. The chain is Myosin-3 from Caenorhabditis briggsae.